The sequence spans 397 residues: ATP-dependent RNA helicase eIF4A (397 aa).

Positions 23–51 (YKFDDLNLKPNIVRGIFGYGYETPSAIQQ) match the Q motif motif. One can recognise a Helicase ATP-binding domain in the interval 54–224 (ILPITEGRDV…TKFMNNPVRI (171 aa)). Position 67–74 (67–74 (AQSGTGKT)) interacts with ATP. Residues 172-175 (DEAD) carry the DEAD box motif. The region spanning 235–396 (GIKQFYINVE…EMPADIGALF (162 aa)) is the Helicase C-terminal domain.

It belongs to the DEAD box helicase family. eIF4A subfamily. As to quaternary structure, component of the eIF4F complex, which composition varies with external and internal environmental conditions. It is composed of at least eIF4A, eIF4E and eIF4G.

Its subcellular location is the cytoplasm. It carries out the reaction ATP + H2O = ADP + phosphate + H(+). ATP-dependent RNA helicase which is a subunit of the eIF4F complex involved in cap recognition and is required for mRNA binding to ribosome. In the current model of translation initiation, eIF4A unwinds RNA secondary structures in the 5'-UTR of mRNAs which is necessary to allow efficient binding of the small ribosomal subunit, and subsequent scanning for the initiator codon. This chain is ATP-dependent RNA helicase eIF4A (TIF1), found in Candida albicans (strain SC5314 / ATCC MYA-2876) (Yeast).